The primary structure comprises 592 residues: MVESGPHSINDDLSTNEYIEQPKFYHDDHASDSNSLSDIDDDNKKHGGLYGTVSRTTTRELPEDLESEISSTHSQDAKEDLEIQHNAAPYSLLNYRDKWCMVALLTACGFWSSLGSPIYYPALKQLEKQFDIDENMVNITVVVYLLFQGLAPTCSGGLADKFGRRPVLLIGMLIYVVASIGLACAPSYGVIVFLRCVQSIGISPSIAISSGVVGDFTVKSERGTFVGATSGFVLLGQAFGSLIGAALAAAWDWRAIFWFLTIGCGASFAICFALLPETKRSIVGNLSIRPKNPLNIAPVTLLPAARRKLKYDNPDYETLDKTKPVFDLTSAFKICALPEIFLSLLPPGLAFAMWTLMLSAISSELSAAPYNYKLTIIGVCYLPAGIGGLIGSFATGKIIDFQYKKKLKVFEEKKAAGIIPEDEKFNIMGARLQSVLPQNFLCVVTYILFGWSCDKGWKIPSILITSCVSSFCAMSTLSAMSTLLVDLYPGKSSTASSCFNFMRCSLSAILMGCFAKMKHSLTVGGTFTLLAGLVFVGNFLMFIPMKHGMRWREEREQRAALKAKSMDQANENGYKLFSKIKFSSPFKSEEKV.

The segment at 1–77 (MVESGPHSIN…EISSTHSQDA (77 aa)) is disordered. A helical membrane pass occupies residues 99-119 (WCMVALLTACGFWSSLGSPIY). A glycan (N-linked (GlcNAc...) asparagine) is linked at asparagine 138. The next 5 helical transmembrane spans lie at 139–159 (ITVV…GGLA), 166–186 (PVLL…ACAP), 188–208 (YGVI…SIAI), 231–251 (GFVL…AAAW), and 255–275 (AIFW…FALL). A glycan (N-linked (GlcNAc...) asparagine) is linked at asparagine 285. 6 helical membrane passes run 340-360 (IFLS…MLSA), 374-394 (LTII…GSFA), 432-452 (LQSV…FGWS), 459-479 (IPSI…TLSA), 497-517 (SCFN…FAKM), and 523-543 (VGGT…LMFI).

This sequence belongs to the major facilitator superfamily. CAR1 family.

It is found in the cell membrane. Its function is as follows. Multidrug transporter acts as a determinant of resistance to acetic acid, flucytosine and clotrimazole, these 3 compounds acting synergistically against the pathogen. Reduces the intracellular accumulation of the antifungal agents flucytosine and, to a moderate extent, of clotrimazole. Its role in acetic acid resistance may be indirect, presumably through the transport of a still unidentified physiological substrate. This chain is Multidrug transporter AQR1, found in Candida glabrata (strain ATCC 2001 / BCRC 20586 / JCM 3761 / NBRC 0622 / NRRL Y-65 / CBS 138) (Yeast).